A 584-amino-acid chain; its full sequence is Alpha-glucosidase MAL32 (584 aa).

The active-site Nucleophile is the D214. E276 (proton donor) is an active-site residue.

Belongs to the glycosyl hydrolase 13 family.

The catalysed reaction is Hydrolysis of terminal, non-reducing (1-&gt;4)-linked alpha-D-glucose residues with release of alpha-D-glucose.. This Saccharomyces cerevisiae (strain ATCC 204508 / S288c) (Baker's yeast) protein is Alpha-glucosidase MAL32 (MAL32).